Reading from the N-terminus, the 198-residue chain is DnaJ homolog subfamily C member 5 (198 aa).

Residues Ser8, Ser10, Ser12, and Ser15 each carry the phosphoserine modification. A J domain is found at 13–82 (GESLYHVLGL…RNIYDKYGSL (70 aa)). At Tyr17 the chain carries Phosphotyrosine. Lys56 carries the post-translational modification N6-acetyllysine. Residue Ser151 is modified to Phosphoserine.

In terms of assembly, homodimer. Interacts with the chaperone complex consisting of HSC70 and SGTA. Interacts with ZDHHC13 (via ANK repeats). Interacts with ZDHHC17 (via ANK repeats). Interacts with SYT1, SYT5 and SYT7, and with SYT9, forming a complex with SNAP25. The interaction with SYT9 is stimulated tenfold in presence of calcium. Formation of the chaperone complex DNAJC5/HSC70 is not regulated by phosphorylation. Ser-10 phosphorylation induces an order-to-disorder transition triggering the interaction with Lys-58. This conformational switch modulates DNAJC5's cellular functions by reducing binding to syntaxin and synaptogamin without altering HSC70 interactions. Post-translationally, palmitoylated. Could be palmitoylated by DHHC3, DHHC7, DHHC15 and DHHC17. Palmitoylation occurs probably in the cysteine-rich domain and regulates DNAJC5 membrane attachment.

The protein resides in the cytoplasm. It is found in the cytosol. The protein localises to the membrane. Its subcellular location is the cytoplasmic vesicle. It localises to the secretory vesicle. The protein resides in the chromaffin granule membrane. It is found in the melanosome. The protein localises to the cell membrane. Its function is as follows. Acts as a co-chaperone for the SNARE protein SNAP-25. Involved in the calcium-mediated control of a late stage of exocytosis. Acts as a general chaperone in regulated exocytosis. May have an important role in presynaptic function. May be involved in calcium-dependent neurotransmitter release at nerve endings. This is DnaJ homolog subfamily C member 5 from Mus musculus (Mouse).